A 396-amino-acid polypeptide reads, in one-letter code: Tryptophan synthase beta chain (396 aa).

Residue lysine 86 is modified to N6-(pyridoxal phosphate)lysine.

The protein belongs to the TrpB family. As to quaternary structure, tetramer of two alpha and two beta chains. Requires pyridoxal 5'-phosphate as cofactor.

The enzyme catalyses (1S,2R)-1-C-(indol-3-yl)glycerol 3-phosphate + L-serine = D-glyceraldehyde 3-phosphate + L-tryptophan + H2O. It participates in amino-acid biosynthesis; L-tryptophan biosynthesis; L-tryptophan from chorismate: step 5/5. Functionally, the beta subunit is responsible for the synthesis of L-tryptophan from indole and L-serine. This is Tryptophan synthase beta chain from Proteus mirabilis (strain HI4320).